The sequence spans 426 residues: Enolase (426 aa).

Position 162 (Gln162) interacts with (2R)-2-phosphoglycerate. The Proton donor role is filled by Glu204. 3 residues coordinate Mg(2+): Asp241, Glu284, and Asp311. (2R)-2-phosphoglycerate contacts are provided by Lys336, Arg365, Ser366, and Lys387. Lys336 acts as the Proton acceptor in catalysis.

It belongs to the enolase family. In terms of assembly, component of the RNA degradosome, a multiprotein complex involved in RNA processing and mRNA degradation. Mg(2+) serves as cofactor.

The protein localises to the cytoplasm. The protein resides in the secreted. It is found in the cell surface. It carries out the reaction (2R)-2-phosphoglycerate = phosphoenolpyruvate + H2O. The protein operates within carbohydrate degradation; glycolysis; pyruvate from D-glyceraldehyde 3-phosphate: step 4/5. Catalyzes the reversible conversion of 2-phosphoglycerate (2-PG) into phosphoenolpyruvate (PEP). It is essential for the degradation of carbohydrates via glycolysis. In Thioalkalivibrio sulfidiphilus (strain HL-EbGR7), this protein is Enolase.